The following is a 737-amino-acid chain: MDAEKATDKTNVHLSSDHERCPVEEVALVVPETDDPSLPVMTFRAWFLGLTSCVLLIFLNTFFTYRTQPLTISAILMQIAVLPIGKFMARTLPTTSHNLLGWSFSLNPGPFNIKEHVIITIFANCGVAYGGGDAYSIGAITVMKAYYKQSLSFICGLFIVLTTQILGYGWAGILRRYLVDPVDMWWPSNLAQVSLFRALHEKENKSKGLTRMKFFLVALGASFIYYALPGYLFPILTFFSWVCWAWPNSITAQQVGSGYHGLGVGAFTLDWAGISAYHGSPLVAPWSSILNVGVGFIMFIYIIVPVCYWKFNTFDARKFPIFSNQLFTTSGQKYDTTKILTPQFDLDIGAYNNYGKLYLSPLFALSIGSGFARFTATLTHVALFNGRDIWKQTWSAVNTTKLDIHGKLMQSYKKVPEWWFYILLAGSVAMSLLMSFVWKESVQLPWWGMLFAFALAFIVTLPIGVIQATTNQQPGYDIIGQFIIGYILPGKPIANLIFKIYGRISTVHALSFLADLKLGHYMKIPPRCMYTAQLVGTVVAGVVNLGVAWWMLESIQDICDIEGDHPNSPWTCPKYRVTFDASVIWGLIGPRRLFGPGGMYRNLVWLFLIGAVLPVPVWALSKIFPNKKWIPLINIPVISYGFAGMPPATPTNIASWLVTGTIFNYFVFNYHKRWWQKYNYVLSAALDAGTAFMGVLLFFALQNAGHDLKWWGTEVDHCPLASCPTAPGIKAKGCPVF.

Helical transmembrane passes span 45–65 (AWFL…FFTY), 69–89 (PLTI…KFMA), 117–137 (VIIT…AYSI), 153–173 (FICG…WAGI), 215–235 (FLVA…LFPI), 255–275 (VGSG…AGIS), 289–309 (ILNV…VCYW), 357–377 (LYLS…FTAT), 418–438 (WWFY…SFVW), 446–466 (WWGM…IGVI), 478–498 (IIGQ…NLIF), 532–552 (AQLV…WWML), 604–624 (VWLF…SKIF), 629–649 (WIPL…PPAT), 650–670 (PTNI…VFNY), and 681–701 (VLSA…FFAL).

This sequence belongs to the oligopeptide OPT transporter (TC 2.A.67.1) family. Strong expression in flowers, leaves and roots. Preferentially expressed in the vascular tissues of seedlings and mature plants as well as in pollen and developing embryos.

It localises to the membrane. May be involved in the translocation of tetra- and pentapeptides across the cellular membrane in an energy-dependent manner. Also acts as a metal transporter that could be a component of the copper transport machinery. Essential for early embryo development. In Arabidopsis thaliana (Mouse-ear cress), this protein is Oligopeptide transporter 3 (OPT3).